The chain runs to 340 residues: Selenide, water dikinase (340 aa).

Cys-13 is an active-site residue. Residues Lys-16 and Ala-43–Asp-45 each bind ATP. A Mg(2+)-binding site is contributed by Asp-46. ATP-binding positions include Asp-63, Asp-86, and Gly-133 to Ser-135. Asp-86 is a binding site for Mg(2+). Asp-221 lines the Mg(2+) pocket.

The protein belongs to the selenophosphate synthase 1 family. Class I subfamily. Homodimer. Requires Mg(2+) as cofactor.

The enzyme catalyses hydrogenselenide + ATP + H2O = selenophosphate + AMP + phosphate + 2 H(+). Functionally, synthesizes selenophosphate from selenide and ATP. The chain is Selenide, water dikinase from Desulfitobacterium hafniense (strain Y51).